A 690-amino-acid chain; its full sequence is DNA ligase (690 aa).

Residues 36–40 (DSVYD), 85–86 (SL), and glutamate 124 contribute to the NAD(+) site. The N6-AMP-lysine intermediate role is filled by lysine 126. Residues arginine 147, glutamate 184, lysine 308, and lysine 332 each contribute to the NAD(+) site. Zn(2+) is bound by residues cysteine 426, cysteine 429, cysteine 444, and cysteine 449. Positions 614–690 (NQSNVFDGKS…INENELKLLL (77 aa)) constitute a BRCT domain.

The protein belongs to the NAD-dependent DNA ligase family. LigA subfamily. Requires Mg(2+) as cofactor. Mn(2+) is required as a cofactor.

It catalyses the reaction NAD(+) + (deoxyribonucleotide)n-3'-hydroxyl + 5'-phospho-(deoxyribonucleotide)m = (deoxyribonucleotide)n+m + AMP + beta-nicotinamide D-nucleotide.. Functionally, DNA ligase that catalyzes the formation of phosphodiester linkages between 5'-phosphoryl and 3'-hydroxyl groups in double-stranded DNA using NAD as a coenzyme and as the energy source for the reaction. It is essential for DNA replication and repair of damaged DNA. The sequence is that of DNA ligase from Prochlorococcus marinus (strain NATL2A).